Consider the following 265-residue polypeptide: Type III pantothenate kinase (265 aa).

ATP is bound at residue 6 to 13 (DVGNTHTV). Residue 112–115 (GADR) participates in substrate binding. The active-site Proton acceptor is Asp-114. Asp-134 is a K(+) binding site. Position 137 (Thr-137) interacts with ATP. Thr-189 provides a ligand contact to substrate.

The protein belongs to the type III pantothenate kinase family. As to quaternary structure, homodimer. It depends on NH4(+) as a cofactor. K(+) is required as a cofactor.

The protein localises to the cytoplasm. It catalyses the reaction (R)-pantothenate + ATP = (R)-4'-phosphopantothenate + ADP + H(+). The protein operates within cofactor biosynthesis; coenzyme A biosynthesis; CoA from (R)-pantothenate: step 1/5. Functionally, catalyzes the phosphorylation of pantothenate (Pan), the first step in CoA biosynthesis. This chain is Type III pantothenate kinase, found in Streptomyces avermitilis (strain ATCC 31267 / DSM 46492 / JCM 5070 / NBRC 14893 / NCIMB 12804 / NRRL 8165 / MA-4680).